A 151-amino-acid polypeptide reads, in one-letter code: Endoribonuclease YbeY (151 aa).

Residues His-113, His-117, and His-123 each coordinate Zn(2+).

It belongs to the endoribonuclease YbeY family. Zn(2+) is required as a cofactor.

The protein localises to the cytoplasm. Functionally, single strand-specific metallo-endoribonuclease involved in late-stage 70S ribosome quality control and in maturation of the 3' terminus of the 16S rRNA. This is Endoribonuclease YbeY from Polaromonas naphthalenivorans (strain CJ2).